We begin with the raw amino-acid sequence, 201 residues long: UPF0177 protein YajF (201 aa).

Transmembrane regions (helical) follow at residues 10 to 30, 44 to 64, 82 to 102, 119 to 139, and 159 to 179; these read TVIL…YVEY, ITVN…MLGI, ILIL…SQFI, VMGS…APIL, and FVFS…VFLI.

It belongs to the UPF0177 family.

The protein resides in the cell membrane. The protein is UPF0177 protein YajF (yajF) of Lactococcus lactis subsp. lactis (strain IL1403) (Streptococcus lactis).